Here is a 558-residue protein sequence, read N- to C-terminus: Formate--tetrahydrofolate ligase (558 aa).

66–73 (TPAGEGKT) lines the ATP pocket.

Belongs to the formate--tetrahydrofolate ligase family.

It carries out the reaction (6S)-5,6,7,8-tetrahydrofolate + formate + ATP = (6R)-10-formyltetrahydrofolate + ADP + phosphate. Its pathway is one-carbon metabolism; tetrahydrofolate interconversion. This chain is Formate--tetrahydrofolate ligase, found in Neisseria gonorrhoeae (strain ATCC 700825 / FA 1090).